The following is a 42-amino-acid chain: Ostricacin-4 (42 aa).

Cystine bridges form between cysteine 8/cysteine 36, cysteine 15/cysteine 30, and cysteine 20/cysteine 37.

Its subcellular location is the secreted. Functionally, has antibacterial activity against the Gram-positive bacterium S.aureus 1056 MRSA (MIC=11.48 ug/ml) and the Gram-negative bacterium E.coli O157:H7 (MIC=12.03 ug/ml). Does not have antifungal activity against the yeast C.albicans 3153A. The polypeptide is Ostricacin-4 (Struthio camelus (Common ostrich)).